Reading from the N-terminus, the 647-residue chain is Type II methyltransferase M.FokI (647 aa).

2 consecutive short sequence motifs (adenine-specific methylase) follow at residues 218–221 and 548–551; these read DPPY.

It belongs to the N(4)/N(6)-methyltransferase family. As to quaternary structure, monomer.

The catalysed reaction is a 2'-deoxyadenosine in DNA + S-adenosyl-L-methionine = an N(6)-methyl-2'-deoxyadenosine in DNA + S-adenosyl-L-homocysteine + H(+). In terms of biological role, an alpha subtype methylase that recognizes the asymmetric double-stranded sequence 5'-GGATG-3', methylates A-3 of both strands, and protects the DNA from cleavage by the FokI endonuclease. The protein is Type II methyltransferase M.FokI of Planomicrobium okeanokoites (Planococcus okeanokoites).